Consider the following 695-residue polypeptide: MARPAKEHLKNLRNIGIMAHIDAGKTTTTERILYYSGRSHKIGEVHEGAATMDWMAQEQERGITITSAATTVFWKDAKINIIDTPGHVDFTIEVERSLRVLDGSVALFCSVSGVEPQSETVWRQADKYGVPRIAFVNKMDRMGADFFDAVKTMREKLHANAIPVQCPIGAEADFKGMVDLVKMRAYLFHDETLGADWDETDIPADLLEKCKKMRAELLEELATLDEDDENFMQKVLENPDSLTEDEINAAIRKGVCQNKFNPVLCGSAFKNKGVQQLLDAVVAWMPSPLDRGQIKAHDLNTDEEILLTPDDEQPLAALAFKIMTDPYVGRLTYIRIYSGTLTKGTSLLNTTKGGEERISRLLEMHANKREEKDEFHTGDIAACIGLKKATTGDTLCTSKRPILLEKMEFPEPVISMAIEPKSKGDREKLAMALSSLSIEDPTFRVTTDEETGQTIIAGMGELHLEILHDRMKREFNVEANVGKPQVAYKETITIPGSSQTKFVKQSGGRGQYAHVELEIRPNEKGKGNEVVSKIVGGVIPREYIAPTIKGIEEGLSTGVLAGFNLVDVLVDIVFGSYHDVDSNEMAFKICGSMALKEAARKCKPVILEPIMKVDVTTPEAHMGDVIGDLNRRRGQIVGQENHKGAVIIHAEVPLSEMFGYSTLLRSLSSGRATYVMEPSHFERVPSKIQEEIIKK.

The region spanning 10–289 (KNLRNIGIMA…AVVAWMPSPL (280 aa)) is the tr-type G domain. Residues 19-26 (AHIDAGKT), 83-87 (DTPGH), and 137-140 (NKMD) each bind GTP.

The protein belongs to the TRAFAC class translation factor GTPase superfamily. Classic translation factor GTPase family. EF-G/EF-2 subfamily.

It is found in the cytoplasm. In terms of biological role, catalyzes the GTP-dependent ribosomal translocation step during translation elongation. During this step, the ribosome changes from the pre-translocational (PRE) to the post-translocational (POST) state as the newly formed A-site-bound peptidyl-tRNA and P-site-bound deacylated tRNA move to the P and E sites, respectively. Catalyzes the coordinated movement of the two tRNA molecules, the mRNA and conformational changes in the ribosome. The chain is Elongation factor G from Protochlamydia amoebophila (strain UWE25).